A 412-amino-acid polypeptide reads, in one-letter code: FAD-dependent monooxygenase nscC (412 aa).

Residues 1-21 (MGKQQETILIIGAGISGLATS) form the signal peptide. FAD is bound by residues E35 and A46. An N-linked (GlcNAc...) asparagine glycan is attached at N92. An FAD-binding site is contributed by R119. 2 N-linked (GlcNAc...) asparagine glycosylation sites follow: N170 and N231. 2 residues coordinate FAD: D326 and G339.

It belongs to the paxM FAD-dependent monooxygenase family. FAD is required as a cofactor.

It participates in secondary metabolite biosynthesis. In terms of biological role, FAD-dependent monooxygenase; part of the gene cluster that mediates the biosynthesis of neosartoricin B, a prenylated anthracenone that probably exhibits T-cell antiproliferative activity, suggestive of a physiological role as an immunosuppressive agent. The non-reducing polyketide synthase nscA probably synthesizes and cyclizes the decaketide backbone. The hydrolase nscB then mediates the product release through hydrolysis followed by spontaneous decarboxylation. The prenyltransferase nscD catalyzes the addition of the dimethylallyl group to the aromatic C5. The FAD-dependent monooxygenase nscC is then responsible for the stereospecific hydroxylation at C2. Neosartoricin B can be converted into two additional compounds neosartoricins C and D. Neosartoricin C is a spirocyclic compound that is cyclized through the attack of C3 hydroxyl on C14, followed by dehydration. On the other hand, neosartoricin D is a further cyclized compound in which attack of C2 on C14 in neosartoricin C results in the formation of the acetal-containing dioxabicyclo-octanone ring. Both of these compounds are novel and possibly represent related metabolites of the gene cluster. In Trichophyton tonsurans (strain CBS 112818) (Scalp ringworm fungus), this protein is FAD-dependent monooxygenase nscC.